We begin with the raw amino-acid sequence, 199 residues long: Recombination protein RecR (199 aa).

The C4-type zinc-finger motif lies at 58 to 73 (CQRCNNFSEEAVCQRC). The 96-residue stretch at 81 to 176 (ATLCVVEMPA…KVSRISRGVP (96 aa)) folds into the Toprim domain.

It belongs to the RecR family.

Its function is as follows. May play a role in DNA repair. It seems to be involved in an RecBC-independent recombinational process of DNA repair. It may act with RecF and RecO. This Azoarcus sp. (strain BH72) protein is Recombination protein RecR.